The following is a 271-amino-acid chain: UPF0758 protein ACIAD3126 (271 aa).

The MPN domain maps to 120–242 (NLNSSRLVLD…TFSFAERALL (123 aa)). Residues His-191, His-193, and Asp-204 each coordinate Zn(2+). The JAMM motif motif lies at 191–204 (HNHPFGKAEPSAAD).

The protein belongs to the UPF0758 family.

The protein is UPF0758 protein ACIAD3126 of Acinetobacter baylyi (strain ATCC 33305 / BD413 / ADP1).